The following is a 727-amino-acid chain: Translation initiation factor IF-2, mitochondrial (727 aa).

The N-terminal 29 residues, 1–29 (MNQKLLKLENLLRFHTICRQVHSPSQRRL), are a transit peptide targeting the mitochondrion. In terms of domain architecture, tr-type G spans 178–346 (PRSPVVTVMG…ATIALAEILE (169 aa)). Residues 187 to 194 (GHVDHGKT) form a G1 region. 187–194 (GHVDHGKT) lines the GTP pocket. Residues 212–216 (GITQH) are G2. GTP contacts are provided by residues 234–237 (DTPG) and 288–291 (NKCD). The G3 stretch occupies residues 234 to 237 (DTPG). Residues 288 to 291 (NKCD) form a G4 region. The interval 324-326 (SAL) is G5. Threonine 688 is modified (phosphothreonine).

Belongs to the TRAFAC class translation factor GTPase superfamily. Classic translation factor GTPase family. IF-2 subfamily. As to quaternary structure, monomer.

Its subcellular location is the mitochondrion. One of the essential components for the initiation of protein synthesis. Protects formylmethionyl-tRNA from spontaneous hydrolysis and promotes its binding to the 30S ribosomal subunits. Also involved in the hydrolysis of GTP during the formation of the 70S ribosomal complex. The polypeptide is Translation initiation factor IF-2, mitochondrial (Mtif2) (Mus musculus (Mouse)).